A 712-amino-acid polypeptide reads, in one-letter code: Probable metal-nicotianamine transporter YSL11 (712 aa).

A disordered region spans residues 25–48; that stretch reads RRNTTAAARGNAGEEEEEAEAVAP. The next 14 membrane-spanning stretches (helical) occupy residues 70–90, 93–113, 138–158, 180–200, 242–262, 300–320, 345–365, 418–438, 446–466, 478–498, 532–552, 593–613, 631–651, and 666–686; these read AFVV…KLSL, GVIP…VRLW, CVVS…LFGM, LGWI…ALVP, LGKY…YTAG, IVNV…WPLI, VFIT…KVFG, VAIG…PLII, ILIA…GSGL, LAIF…LVGL, FVSQ…VFWL, LTLC…KDLV, FYLG…LYFW, and VASG…VLSL.

This sequence belongs to the YSL (TC 2.A.67.2) family.

The protein resides in the membrane. Functionally, may be involved in the transport of nicotianamine-chelated metals. This chain is Probable metal-nicotianamine transporter YSL11 (YSL11), found in Oryza sativa subsp. japonica (Rice).